A 213-amino-acid polypeptide reads, in one-letter code: Small ribosomal subunit protein uS3 (213 aa).

Residues 38-106 (IRKYVKKTLY…EFSIEVNEIR (69 aa)) form the KH type-2 domain.

This sequence belongs to the universal ribosomal protein uS3 family. Part of the 30S ribosomal subunit. Forms a tight complex with proteins S10 and S14.

Its function is as follows. Binds the lower part of the 30S subunit head. Binds mRNA in the 70S ribosome, positioning it for translation. This chain is Small ribosomal subunit protein uS3, found in Oleidesulfovibrio alaskensis (strain ATCC BAA-1058 / DSM 17464 / G20) (Desulfovibrio alaskensis).